The sequence spans 567 residues: Lactase-like protein (567 aa).

The first 21 residues, 1–21 (MKPVWVATLLWMLLLVPRLGA), serve as a signal peptide directing secretion. The Extracellular segment spans residues 23–541 (RKGSPEEASF…LLSHMQMVTE (519 aa)). N-linked (GlcNAc...) asparagine glycosylation is found at Asn-80, Asn-171, and Asn-245. A helical membrane pass occupies residues 542–562 (IVVPTVCSLCVLITAVLLMLL). At 563-567 (LRRQS) the chain is on the cytoplasmic side.

Belongs to the glycosyl hydrolase 1 family. Klotho subfamily. May form dimers.

It localises to the endoplasmic reticulum membrane. In terms of biological role, plays a role in formation of the lens suture in the eye, which is important for normal optical properties of the lens. This Homo sapiens (Human) protein is Lactase-like protein (LCTL).